A 447-amino-acid polypeptide reads, in one-letter code: MDPEAVELEKRHVHSVYENTAPYFTDLQSKAWPRVRQFLQDQKPGSLVADIGCGTGKYLKVNSQVHTLGCDYCGPLVEIARNRGCEVMVCDNLNLPFRDQGFDAIISIGVIHHFSTKERRIRAIKEMARVLAPGGQLMIYVWAMEQKNRRFEKQDVLVPWNRALCSRLLSESHQSWGHHCEHPRSRGFQGPGSVCGCAVCFKGRCDSKRSHSMDYGSAVARTCCEAISKEGERENGLYSNFGKSFRSWFFSRSLDESTLRKQIERVRPMKIPEAWANSTVSQQPSRHPSLDLHAPEPFSTKGPNLDEVFVDTSSQRHLGWLRTPGTSDNFSGHKGGGSRRKEGGNFLDITDTGDSVAASNSSDPSARKILRRVSAFDSNDSNSEDSSFLEAQRDATDSKAFMRYYHVFREGELSSLLQESVSELQVLSSGNDHGNWCIIAEKKRSWD.

Serine 212 bears the Phosphoserine mark. Disordered regions lie at residues 274–306 (AWAN…PNLD) and 320–348 (WLRT…NFLD). Residues 276-286 (ANSTVSQQPSR) show a composition bias toward polar residues.

It belongs to the methyltransferase superfamily.

In terms of biological role, may modify wobble uridines in specific arginine and glutamic acid tRNAs. Acts as a tumor suppressor by promoting the expression of LIN9. The sequence is that of Probable tRNA methyltransferase 9B (Trmt9b) from Mus musculus (Mouse).